A 422-amino-acid polypeptide reads, in one-letter code: Glutamyl-tRNA reductase (422 aa).

Substrate is bound by residues 49 to 52 (TCNR), Ser-107, 112 to 114 (EPQ), and Gln-118. The active-site Nucleophile is Cys-50. 187 to 192 (GAGETI) provides a ligand contact to NADP(+).

It belongs to the glutamyl-tRNA reductase family. In terms of assembly, homodimer.

The enzyme catalyses (S)-4-amino-5-oxopentanoate + tRNA(Glu) + NADP(+) = L-glutamyl-tRNA(Glu) + NADPH + H(+). The protein operates within porphyrin-containing compound metabolism; protoporphyrin-IX biosynthesis; 5-aminolevulinate from L-glutamyl-tRNA(Glu): step 1/2. Its function is as follows. Catalyzes the NADPH-dependent reduction of glutamyl-tRNA(Glu) to glutamate 1-semialdehyde (GSA). The protein is Glutamyl-tRNA reductase of Pseudomonas aeruginosa (strain ATCC 15692 / DSM 22644 / CIP 104116 / JCM 14847 / LMG 12228 / 1C / PRS 101 / PAO1).